We begin with the raw amino-acid sequence, 625 residues long: Cysteine-rich receptor-like protein kinase 46 (625 aa).

Residues 1-23 form the signal peptide; the sequence is MASTLISSLAVVLPLTLLAPSMS. At 24–252 the chain is on the extracellular side; sequence MKISRIDVLG…LLAMSFTKEN (229 aa). 2 Gnk2-homologous domains span residues 29 to 130 and 135 to 237; these read IDVL…NYSF and VSHQ…NYTF. Residues asparagine 38, asparagine 127, asparagine 234, and asparagine 252 are each glycosylated (N-linked (GlcNAc...) asparagine). A helical membrane pass occupies residues 253–273; the sequence is LTYIFVISMVGVLAIAAGFWC. Over 274-625 the chain is Cytoplasmic; sequence GKCFYMRTSP…TKPPFLHDSM (352 aa). One can recognise a Protein kinase domain in the interval 331–621; it reads FNESCKLGVG…LPTPTKPPFL (291 aa). ATP is bound by residues 337 to 345 and lysine 359; that span reads LGVGGYGEV. Tyrosine 404 bears the Phosphotyrosine mark. The Proton acceptor role is filled by aspartate 454. At serine 458 the chain carries Phosphoserine. Threonine 499 carries the post-translational modification Phosphothreonine. Residue tyrosine 507 is modified to Phosphotyrosine.

Belongs to the protein kinase superfamily. Ser/Thr protein kinase family. CRK subfamily.

Its subcellular location is the membrane. It carries out the reaction L-seryl-[protein] + ATP = O-phospho-L-seryl-[protein] + ADP + H(+). The catalysed reaction is L-threonyl-[protein] + ATP = O-phospho-L-threonyl-[protein] + ADP + H(+). The polypeptide is Cysteine-rich receptor-like protein kinase 46 (Arabidopsis thaliana (Mouse-ear cress)).